Reading from the N-terminus, the 271-residue chain is Cyanophycinase (271 aa).

Active-site charge relay system residues include serine 132, histidine 174, and glutamate 201.

It belongs to the peptidase S51 family. As to quaternary structure, homodimer.

It catalyses the reaction [L-4-(L-arginin-2-N-yl)aspartate](n) + H2O = [L-4-(L-arginin-2-N-yl)aspartate](n-1) + L-4-(L-arginin-2-N-yl)aspartate. Its function is as follows. Exopeptidase that catalyzes the hydrolytic cleavage of multi-L-arginyl-poly-L-aspartic acid (cyanophycin; a water-insoluble reserve polymer) into aspartate-arginine dipeptides. The polypeptide is Cyanophycinase (cphB) (Synechocystis sp. (strain ATCC 27184 / PCC 6803 / Kazusa)).